Consider the following 822-residue polypeptide: Protein smoothened (822 aa).

The signal sequence occupies residues 1–28; that stretch reads MSSKRPCSIVGSFWMLWIWTATSMVARA. The Extracellular segment spans residues 29-212; sequence VILHPNETIF…EDEHSDMHSY (184 aa). Residue N34 is glycosylated (N-linked (GlcNAc...) asparagine). 5 disulfides stabilise this stretch: C42-C157, C48-C112, C56-C105, C96-C132, and C125-C147. The FZ domain occupies 43 to 160; sequence KKSTTCEVLK…EQFPKGCQNE (118 aa). D73 provides a ligand contact to cholesterol. N167 is a glycosylation site (N-linked (GlcNAc...) asparagine). Intrachain disulfides connect C172-C192, C196-C274, and C293-C369. The chain crosses the membrane as a helical span at residues 213 to 233; that stretch reads IAVFGTITLLCTFFTLATFLA. The Cytoplasmic segment spans residues 234–241; the sequence is DWKNSNRY. A helical membrane pass occupies residues 242-262; the sequence is PAVILFYVNACFFIGSIGWLA. Residues 263-293 are Extracellular-facing; that stretch reads QFMDGARNEIVCKSDNTMRLGEPSSTETLSC. Residues 294–314 form a helical membrane-spanning segment; it reads VIIFVIVYYSLMSGVIWFVML. The Cytoplasmic portion of the chain corresponds to 315 to 335; it reads TYAWHTSFKALGTTHQPLSGK. A helical transmembrane segment spans residues 336–356; the sequence is TSYFHLVTWSIPFILTVAILA. At 357 to 381 the chain is on the extracellular side; sequence NSQVDADSVSGICFVGYRYYEYRAG. Y373 is a binding site for cholesterol. The helical transmembrane segment at 382–402 threads the bilayer; it reads FVLAPIGFVLVIGGYFLIRGV. The Cytoplasmic segment spans residues 403 to 430; the sequence is MTLFSIKSNHPGLLSEKAASKINETMLR. A helical membrane pass occupies residues 431–451; the sequence is LGIFGFLAFGFVLITFGCHFY. Over 452–503 the chain is Extracellular; the sequence is DFFNQAEWERSFREYVLCEANVTIAHQTNKPIPECAIKNRPSLLVGKINLFS. A disulfide bridge links C469 with C486. An N-linked (GlcNAc...) asparagine glycan is attached at N472. The chain crosses the membrane as a helical span at residues 504–524; the sequence is MFGTGIAMSTWVWTKATILIW. The Cytoplasmic segment spans residues 525 to 822; sequence KRTWFRIIGR…AELLDADSDF (298 aa). Residues 645-687 form a disordered region; the sequence is MMKRKKKKKKRRKEVRPAGPAADEGNPAYHRREFGPSAVPRLP. Over residues 647–658 the composition is skewed to basic residues; that stretch reads KRKKKKKKRRKE.

This sequence belongs to the G-protein coupled receptor Fz/Smo family. As to quaternary structure, monomer.

The protein localises to the cell membrane. It localises to the cell projection. Its subcellular location is the cilium. Its function is as follows. G protein-coupled receptor which associates with the patched protein (ptch) to transduce Hedgehog protein signaling. Binding of sonic hedgehog (shh) to its receptor patched prevents inhibition of smoothened (smo) by patched. When active, smo binds to and sequesters protein kinase A catalytic subunit prkaca at the cell membrane, preventing prkaca-mediated phosphorylation of gli transcription factors which releases the gli proteins from prkaca-mediated inhibition and allows for transcriptional activation of Hedgehog signaling pathway target genes. Required for the development of primary and secondary motoneurons but not for the specification of midbrain dopaminergic neurons or development of the medial floor plate. Required for induction of lateral floor plate and posterior motoneurons, anterior neural plate patterning, dorsoventral forebrain patterning, dorsoventral retinal patterning, optic stalk development, and formation of the forebrain primary axonal scaffold. Required to regulate the formation of a subset of cerebellar neurons by limiting wnt1 expression which controls cerebellar expression of transcription factor olig2. Required for development of the pancreas. Required for muscle development. Required for the formation of a single continuous intestinal lumen from multiple discontinuous lumens, probably by regulating remodeling through rab11a-mediated trafficking to facilitate lumen fusion. Required for development of the adenohypophysis. Required for anteroposterior patterning of the otic vesicle. Required for development of the anterior craniofacial skeleton. Required for patterning of the caudal fin. Required during gastrulation and early somitogenesis stages to promote cardiomyocyte formation by regulating the specification of myocardial progenitors. Required for induction of arterial endothelial cell formation by repressing venous cell fate. This Danio rerio (Zebrafish) protein is Protein smoothened.